The following is a 407-amino-acid chain: Elongation factor Tu (407 aa).

Residues 10 to 217 (KPHVNVGTIG…ALDSYIPEPE (208 aa)) form the tr-type G domain. Residues 19–26 (GHVDHGKT) form a G1 region. A GTP-binding site is contributed by 19–26 (GHVDHGKT). Residue threonine 26 coordinates Mg(2+). The tract at residues 60 to 64 (GITIA) is G2. Positions 81–84 (DCPG) are G3. Residues 81-85 (DCPGH) and 136-139 (NKAD) contribute to the GTP site. Residues 136 to 139 (NKAD) form a G4 region. The segment at 184 to 186 (SAL) is G5.

It belongs to the TRAFAC class translation factor GTPase superfamily. Classic translation factor GTPase family. EF-Tu/EF-1A subfamily. As to quaternary structure, monomer.

Its subcellular location is the cytoplasm. It carries out the reaction GTP + H2O = GDP + phosphate + H(+). Its function is as follows. GTP hydrolase that promotes the GTP-dependent binding of aminoacyl-tRNA to the A-site of ribosomes during protein biosynthesis. In Saccharophagus degradans (strain 2-40 / ATCC 43961 / DSM 17024), this protein is Elongation factor Tu.